The following is a 212-amino-acid chain: External core antigen (212 aa).

Residues 1-19 (MQLFHLCLIISCSCPTVQA) form the signal peptide. Residues 25–27 (GWL) are HBEAG. The interval 165-212 (NAPILSTLPETTVVRRRGRSPRRRTPSPRRRRSQSPRRRRSQSRESQC) is disordered. Positions 178–205 (VRRRGRSPRRRTPSPRRRRSQSPRRRRS) are enriched in basic residues. The 1; half-length repeat unit spans residues 184–190 (SPRRRTP). The interval 184–206 (SPRRRTPSPRRRRSQSPRRRRSQ) is 3 X 8 AA repeats of S-P-R-R-R-R-S-Q. Residues 184 to 212 (SPRRRTPSPRRRRSQSPRRRRSQSRESQC) constitute a propeptide that is removed on maturation. Tandem repeats lie at residues 191-198 (SPRRRRSQ) and 199-206 (SPRRRRSQ).

The protein belongs to the orthohepadnavirus precore antigen family. In terms of assembly, homodimerizes. In terms of processing, phosphorylated. Post-translationally, cleaved by host furin.

The protein localises to the secreted. Its subcellular location is the host nucleus. May regulate immune response to the intracellular capsid in acting as a T-cell tolerogen, by having an immunoregulatory effect which prevents destruction of infected cells by cytotoxic T-cells. This immune regulation may predispose to chronicity during perinatal infections and prevent severe liver injury during adult infections. The chain is External core antigen from Hepatitis B virus genotype C subtype ayw (isolate China/Tibet127/2002) (HBV-C).